A 570-amino-acid polypeptide reads, in one-letter code: Periplasmic trehalase (570 aa).

Residues 1 to 34 (MIPPEIRRSVLLQKAIKLALAGTLLTFASFSATA) form the signal peptide. Substrate-binding positions include arginine 159, 166–167 (WD), asparagine 203, 212–214 (RSQ), 284–286 (RPE), and glycine 317. Residues aspartate 319 and glutamate 503 each act as proton donor/acceptor in the active site. Glutamate 518 is a substrate binding site. Positions 545–570 (PCDSVPSTRPASLSATPTKTPSAATQ) are disordered. Low complexity predominate over residues 554–570 (PASLSATPTKTPSAATQ).

This sequence belongs to the glycosyl hydrolase 37 family. In terms of assembly, monomer.

The protein resides in the periplasm. It catalyses the reaction alpha,alpha-trehalose + H2O = alpha-D-glucose + beta-D-glucose. Functionally, provides the cells with the ability to utilize trehalose at high osmolarity by splitting it into glucose molecules that can subsequently be taken up by the phosphotransferase-mediated uptake system. This is Periplasmic trehalase from Salmonella agona (strain SL483).